We begin with the raw amino-acid sequence, 890 residues long: V-type proton ATPase subunit a, Golgi isoform (890 aa).

The residue at position 1 (M1) is an N-acetylmethionine. Topologically, residues 1-450 (MNQEEAIFRS…DAYGIATYKE (450 aa)) are cytoplasmic. The stretch at 113-154 (LENVNDMVKEITDCESRARQLDESLDSLRSKLNDLLEQRQVI) forms a coiled coil. S223 and S228 each carry phosphoserine. Positions 297-347 (LKKVKRVIDSLNGKIVSLNTRSSELVDTLNRQIDDLQRILDTTEQTLHTEL) form a coiled coil. A helical membrane pass occupies residues 451-469 (INAGLATVVTFPFMFAIMF). Over 470-471 (GD) the chain is Vacuolar. Residues 472-488 (MGHGFILFLMALFLVLN) form a helical membrane-spanning segment. Topologically, residues 489 to 502 (ERKFGAMHRDEIFD) are cytoplasmic. A helical transmembrane segment spans residues 503–532 (MAFTGRYVLLLMGAFSVYTGLLYNDIFSKS). Over 533-580 (MTIFKSGWQWPSTFRKGESIEAKKTGVYPFGLDFAWHGTDNGLLFSNS) the chain is Vacuolar. Residues 581–600 (YKMKLSILMGYAHMTYSFMF) traverse the membrane as a helical segment. At 601-618 (SYINYRAKNSKVDIIGNF) the chain is on the cytoplasmic side. The chain crosses the membrane as a helical span at residues 619-639 (IPGLVFMQSIFGYLSWAIVYK). Residues 640 to 682 (WSKDWIKDDKPAPGLLNMLINMFLAPGTIDDQLYSGQAKLQVV) are Vacuolar-facing. Residues 683–702 (LLLAALVCVPWLLLYKPLTL) form a helical membrane-spanning segment. The Cytoplasmic portion of the chain corresponds to 703-779 (RRLNKNGGGG…DVMIHQVIHT (77 aa)). A helical membrane pass occupies residues 780–804 (IEFCLNCISHTASYLRLWALSLAHA). Topologically, residues 805-828 (QLSSVLWDMTISNAFSSKNSGSPL) are vacuolar. Residues 829 to 867 (AVMKVVFLFAMWFVLTVCILVFMEGTSAMLHALRLHWVE) form a helical membrane-spanning segment. Over 868 to 890 (AMSKFFEGEGYAYEPFSFRAIIE) the chain is Cytoplasmic.

This sequence belongs to the V-ATPase 116 kDa subunit family. As to quaternary structure, V-ATPase is a heteromultimeric enzyme composed of a peripheral catalytic V1 complex (components A to H) attached to an integral membrane V0 proton pore complex (components: a, c, c', c'', d, e, f and VOA1). In terms of processing, glycosylated.

It localises to the endosome membrane. It is found in the golgi apparatus membrane. In terms of biological role, subunit of the V0 complex of vacuolar(H+)-ATPase (V-ATPase), a multisubunit enzyme composed of a peripheral complex (V1) that hydrolyzes ATP and a membrane integral complex (V0) that translocates protons. V-ATPase is responsible for acidifying and maintaining the pH of intracellular compartments. Is present only in Golgi- and endosome-residing V-ATPase complexes; enzymes containing this subunit have a 4-fold lower ratio of proton transport to ATP hydrolysis than complexes containing the vacuolar isoform and do not dissociate V1 and V0 in response to glucose depletion. The protein is V-type proton ATPase subunit a, Golgi isoform (STV1) of Saccharomyces cerevisiae (strain ATCC 204508 / S288c) (Baker's yeast).